A 335-amino-acid chain; its full sequence is MTSSAIRINKKPVVLSGIQPSSGMLHLGNYLGALKSFGRMQDDYTTYFMLANLHSMTFPQNPEVLRENTIRIAAQCIAAGIDPAKSIVFLQSDVYQHNQLAWVLGNVCIFGEAARMTQFKDKSGKQGNISTGLFTYPILMASDILLYDSAFVPVGADQKQHLELTRTLARRFNAQYGQTFLVPQPFECSIRIYDLQDPAVKMSKSSATESGTIFLLDSPDKIVKKIMRSVTDSEDVIGYDRETKPGVSNLVVMYSCLTDCTIEQTVNIYSGKKYSVLKKDLSDILVEVCTTIATRTNELLDDKNYIRKILVTASEQARGVAQKTIDRVYEKLGVY.

ATP is bound by residues 19 to 21 (QPS) and 28 to 29 (GN). Positions 20-29 (PSSGMLHLGN) match the 'HIGH' region motif. An L-tryptophan-binding site is contributed by Asp143. ATP contacts are provided by residues 155–157 (GAD), Ile192, and 201–205 (KMSKS). The 'KMSKS' region motif lies at 201–205 (KMSKS).

The protein belongs to the class-I aminoacyl-tRNA synthetase family. Homodimer.

It is found in the cytoplasm. It carries out the reaction tRNA(Trp) + L-tryptophan + ATP = L-tryptophyl-tRNA(Trp) + AMP + diphosphate + H(+). In terms of biological role, catalyzes the attachment of tryptophan to tRNA(Trp). The sequence is that of Tryptophan--tRNA ligase from Tropheryma whipplei (strain Twist) (Whipple's bacillus).